Reading from the N-terminus, the 174-residue chain is Peptide methionine sulfoxide reductase MsrA (174 aa).

The active site involves Cys-10.

Belongs to the MsrA Met sulfoxide reductase family.

It carries out the reaction L-methionyl-[protein] + [thioredoxin]-disulfide + H2O = L-methionyl-(S)-S-oxide-[protein] + [thioredoxin]-dithiol. The catalysed reaction is [thioredoxin]-disulfide + L-methionine + H2O = L-methionine (S)-S-oxide + [thioredoxin]-dithiol. Functionally, has an important function as a repair enzyme for proteins that have been inactivated by oxidation. Catalyzes the reversible oxidation-reduction of methionine sulfoxide in proteins to methionine. The polypeptide is Peptide methionine sulfoxide reductase MsrA (Pseudarthrobacter chlorophenolicus (strain ATCC 700700 / DSM 12829 / CIP 107037 / JCM 12360 / KCTC 9906 / NCIMB 13794 / A6) (Arthrobacter chlorophenolicus)).